The sequence spans 155 residues: Interleukin-2 (155 aa).

Residues 1 to 20 (MYKMQLLSCIALMLVLVANS) form the signal peptide. The O-linked (GalNAc...) threonine glycan is linked to threonine 24. Cysteine 79 and cysteine 127 are joined by a disulfide. A glycan (N-linked (GlcNAc...) asparagine) is linked at asparagine 112.

Belongs to the IL-2 family.

It is found in the secreted. In terms of biological role, cytokine produced by activated CD4-positive helper T-cells and to a lesser extend activated CD8-positive T-cells and natural killer (NK) cells that plays pivotal roles in the immune response and tolerance. Binds to a receptor complex composed of either the high-affinity trimeric IL-2R (IL2RA/CD25, IL2RB/CD122 and IL2RG/CD132) or the low-affinity dimeric IL-2R (IL2RB and IL2RG). Interaction with the receptor leads to oligomerization and conformation changes in the IL-2R subunits resulting in downstream signaling starting with phosphorylation of JAK1 and JAK3. In turn, JAK1 and JAK3 phosphorylate the receptor to form a docking site leading to the phosphorylation of several substrates including STAT5. This process leads to activation of several pathways including STAT, phosphoinositide-3-kinase/PI3K and mitogen-activated protein kinase/MAPK pathways. Functions as a T-cell growth factor and can increase NK-cell cytolytic activity as well. Promotes strong proliferation of activated B-cells and subsequently immunoglobulin production. Plays a pivotal role in regulating the adaptive immune system by controlling the survival and proliferation of regulatory T-cells, which are required for the maintenance of immune tolerance. Moreover, participates in the differentiation and homeostasis of effector T-cell subsets, including Th1, Th2, Th17 as well as memory CD8-positive T-cells. In Vulpes vulpes (Red fox), this protein is Interleukin-2 (IL2).